A 142-amino-acid polypeptide reads, in one-letter code: Putative pre-16S rRNA nuclease (142 aa).

The protein belongs to the YqgF nuclease family.

It is found in the cytoplasm. Functionally, could be a nuclease involved in processing of the 5'-end of pre-16S rRNA. The polypeptide is Putative pre-16S rRNA nuclease (Staphylococcus haemolyticus (strain JCSC1435)).